Reading from the N-terminus, the 325-residue chain is Thiamine-monophosphate kinase (325 aa).

2 residues coordinate Mg(2+): Asp-27 and Asp-44. His-51 provides a ligand contact to substrate. Residue Asp-73 participates in Mg(2+) binding. ATP is bound by residues Tyr-103, Gly-120 to Asp-121, and Arg-147. Asp-121 is a binding site for Mg(2+). Asp-215 provides a ligand contact to Mg(2+). Ser-217 contacts ATP. Asp-218 contributes to the Mg(2+) binding site. Substrate is bound by residues Glu-264 and Tyr-321.

The protein belongs to the thiamine-monophosphate kinase family.

It carries out the reaction thiamine phosphate + ATP = thiamine diphosphate + ADP. It participates in cofactor biosynthesis; thiamine diphosphate biosynthesis; thiamine diphosphate from thiamine phosphate: step 1/1. Its function is as follows. Catalyzes the ATP-dependent phosphorylation of thiamine-monophosphate (TMP) to form thiamine-pyrophosphate (TPP), the active form of vitamin B1. In Bacillus subtilis (strain 168), this protein is Thiamine-monophosphate kinase.